The sequence spans 139 residues: Prostate-associated microseminoprotein (139 aa).

An N-terminal signal peptide occupies residues 1-35; the sequence is MALRMLWAGQAKGILGGWRTICLVVSLFLQHPGVS. 5 cysteine pairs are disulfide-bonded: Cys-38/Cys-78, Cys-46/Cys-69, Cys-64/Cys-100, Cys-67/Cys-77, and Cys-91/Cys-114. The tract at residues 116–139 is disordered; sequence GGGPDLEWGSANTPAPGASAPHSS.

The protein belongs to the beta-microseminoprotein family.

The protein resides in the secreted. Its function is as follows. Acts as a ligand for C-C chemokine receptor CCR2. Signals through binding and activation of CCR2 and induces a strong chemotactic response and mobilization of intracellular calcium ions. Exhibits a chemotactic activity for monocytes and lymphocytes but not neutrophils. In Mus musculus (Mouse), this protein is Prostate-associated microseminoprotein (Msmp).